The sequence spans 232 residues: Pyridoxal 5'-phosphate synthase subunit PdxS (232 aa).

The Schiff-base intermediate with D-ribose 5-phosphate role is filled by Lys-23. Gly-95 lines the D-ribose 5-phosphate pocket. Arg-107 contributes to the D-glyceraldehyde 3-phosphate binding site. D-ribose 5-phosphate contacts are provided by residues Gly-156 and Gly-177–Ser-178.

Belongs to the PdxS/SNZ family. In the presence of PdxT, forms a dodecamer of heterodimers.

The enzyme catalyses aldehydo-D-ribose 5-phosphate + D-glyceraldehyde 3-phosphate + L-glutamine = pyridoxal 5'-phosphate + L-glutamate + phosphate + 3 H2O + H(+). It participates in cofactor biosynthesis; pyridoxal 5'-phosphate biosynthesis. In terms of biological role, catalyzes the formation of pyridoxal 5'-phosphate from ribose 5-phosphate (RBP), glyceraldehyde 3-phosphate (G3P) and ammonia. The ammonia is provided by the PdxT subunit. Can also use ribulose 5-phosphate and dihydroxyacetone phosphate as substrates, resulting from enzyme-catalyzed isomerization of RBP and G3P, respectively. This is Pyridoxal 5'-phosphate synthase subunit PdxS from Clostridium novyi.